The following is a 462-amino-acid chain: L-seryl-tRNA(Sec) selenium transferase (462 aa).

N6-(pyridoxal phosphate)lysine is present on Lys293.

The protein belongs to the SelA family. Requires pyridoxal 5'-phosphate as cofactor.

It localises to the cytoplasm. The catalysed reaction is L-seryl-tRNA(Sec) + selenophosphate + H(+) = L-selenocysteinyl-tRNA(Sec) + phosphate. It functions in the pathway aminoacyl-tRNA biosynthesis; selenocysteinyl-tRNA(Sec) biosynthesis; selenocysteinyl-tRNA(Sec) from L-seryl-tRNA(Sec) (bacterial route): step 1/1. Its function is as follows. Converts seryl-tRNA(Sec) to selenocysteinyl-tRNA(Sec) required for selenoprotein biosynthesis. This Clostridium botulinum (strain Langeland / NCTC 10281 / Type F) protein is L-seryl-tRNA(Sec) selenium transferase.